A 387-amino-acid polypeptide reads, in one-letter code: 3-ketoacyl-CoA thiolase (387 aa).

Catalysis depends on Cys91, which acts as the Acyl-thioester intermediate. Catalysis depends on proton acceptor residues His343 and Cys373.

The protein belongs to the thiolase-like superfamily. Thiolase family. Heterotetramer of two alpha chains (FadB) and two beta chains (FadA).

It is found in the cytoplasm. The enzyme catalyses an acyl-CoA + acetyl-CoA = a 3-oxoacyl-CoA + CoA. It participates in lipid metabolism; fatty acid beta-oxidation. Functionally, catalyzes the final step of fatty acid oxidation in which acetyl-CoA is released and the CoA ester of a fatty acid two carbons shorter is formed. The protein is 3-ketoacyl-CoA thiolase of Salmonella paratyphi A (strain ATCC 9150 / SARB42).